A 129-amino-acid polypeptide reads, in one-letter code: Protein BEX2 (129 aa).

The interval 1–37 (MESKVEQGVKNLNMENDHQEKEEKEEKPQDASKRDPI) is disordered. The span at 15–36 (ENDHQEKEEKEEKPQDASKRDP) shows a compositional bias: basic and acidic residues. Arginine 51 carries the omega-N-methylarginine modification. Residues 118 to 122 (HHDHH) form a his cluster region. Cysteine 126 contributes to the Zn(2+) binding site.

It belongs to the BEX family. In terms of assembly, interacts with LMO2, possibly leading to regulate the transcriptional activity of a DNA-binding complex containing LMO2. Interacts with OMP. Primarily localized to neuronal cells within several regions of the brain, including the olfactory epithelium, bulb, peri/paraventricular nuclei, suprachiasmatic nucleus, arcuate nucleus, median eminence, lateral hypothalamic area, thalamus, hippocampus and cerebellum (at protein level).

Its subcellular location is the cytoplasm. It localises to the nucleus. In terms of biological role, regulator of mitochondrial apoptosis and G1 cell cycle. Regulates the level of PP2A regulatory subunit B and PP2A phosphatase activity. In absence of reductive stress, acts as a pseudosubstrate for the CRL2(FEM1B) complex: associates with FEM1B via zinc, thereby preventing association between FEM1B and its substrates. This is Protein BEX2 from Mus musculus (Mouse).